A 175-amino-acid polypeptide reads, in one-letter code: Avenin-like a3 (175 aa).

The first 19 residues, 1 to 19, serve as a signal peptide directing secretion; it reads MKTMFLLALLAFTATSAVA.

This sequence belongs to the prolamin family. Contains 7 disulfide bonds.

Its function is as follows. Seed storage protein. Not integrated in the gluten polymer through disulfide bonds, unless incorporated by reduction and reoxidation during dough making. Increases dough strength and bread volume, but decreases dough stability when added into a base wheat flour. This is Avenin-like a3 from Triticum aestivum (Wheat).